We begin with the raw amino-acid sequence, 196 residues long: Corrinoid adenosyltransferase CobA (196 aa).

36–42 lines the ATP pocket; the sequence is GNGKGKT.

It belongs to the Cob(I)alamin adenosyltransferase family. In terms of assembly, homodimer.

Its subcellular location is the cytoplasm. The catalysed reaction is 2 cob(II)yrinate a,c diamide + reduced [electron-transfer flavoprotein] + 2 ATP = 2 adenosylcob(III)yrinate a,c-diamide + 2 triphosphate + oxidized [electron-transfer flavoprotein] + 3 H(+). It catalyses the reaction 2 cob(II)alamin + reduced [electron-transfer flavoprotein] + 2 ATP = 2 adenosylcob(III)alamin + 2 triphosphate + oxidized [electron-transfer flavoprotein] + 3 H(+). The protein operates within cofactor biosynthesis; adenosylcobalamin biosynthesis; adenosylcobalamin from cob(II)yrinate a,c-diamide: step 2/7. Required for both de novo synthesis of the corrin ring for the assimilation of exogenous corrinoids. Participates in the adenosylation of a variety of incomplete and complete corrinoids. The polypeptide is Corrinoid adenosyltransferase CobA (btuR) (Salmonella typhimurium (strain LT2 / SGSC1412 / ATCC 700720)).